Consider the following 1121-residue polypeptide: tRNA (34-2'-O)-methyltransferase regulator WDR6 (1121 aa).

Methionine 1 is modified (N-acetylmethionine). WD repeat units follow at residues 53-97, 105-143, 147-189, 200-238, 247-285, 289-327, 335-376, 381-422, 425-470, 476-520, 559-598, 604-642, 645-684, 739-785, 848-893, 901-946, 970-1012, 1036-1073, and 1079-1121; these read IKRV…VVKI, WELWRSGLWNMSDWIWDARWLEGNIALALGHNSVVLYDP, CILQ…VWYP, APDRRISGHVGIIFSMSYLESKGLLATASEDRSVRIWKV, RVQNIGHCFGHSARVWQVKLLENYLISAGEDCVCLVWSH, ILQAFRGHQGRGIRAIAAHERQAWVITGGDDSGIRLWHL, LGVS…LYDV, WEQL…VVPI, PTAA…ISAA, IFVK…LFPS, PVSTLPSLHGKQGVTSVTCHGGYVYTTGRDGAYYQLFVRD, VLRQKSCRGMNWLAGLRIVPDGSMVILGFHANEFVVWNP, HEKLHIVNCGGGHRSWAFSDTEAAMAFAYLKDGDVMLYRA, LTDI…VWGI, RNRH…LFLL, QLLA…FWDL, GTPS…VFVL, EEYSVPCAHAAHVTGLKILSPSIMVSASIDQRLTFWRL, and TFMN…NWYD.

Belongs to the WD repeat WDR6 family. In terms of assembly, interacts with FTSJ1; the interaction is direct, and required for 2'-O-methylation of position 34 in substrate tRNAs. Interacts with IRS4. Interacts with STK11/LKB1. In terms of tissue distribution, ubiquitous.

It is found in the cytoplasm. Functionally, together with methyltransferase FTSJ1, methylates the 2'-O-ribose of nucleotides at position 34 of the tRNA anticodon loop of substrate tRNAs. Required for the correct positioning of the substrate tRNA for methylation. Required to suppress amino acid starvation-induced autophagy. Enhances the STK11/LKB1-induced cell growth suppression activity. The polypeptide is tRNA (34-2'-O)-methyltransferase regulator WDR6 (WDR6) (Homo sapiens (Human)).